Reading from the N-terminus, the 351-residue chain is Photosystem II D2 protein (351 aa).

Residues 39 to 59 (TAYLAIGGWLTGTTFVTSWYT) traverse the membrane as a helical segment. His-116 contributes to the chlorophyll a binding site. A helical transmembrane segment spans residues 123–139 (GFMLRQFELARLIGIRP). Positions 128 and 141 each coordinate pheophytin a. Residues 151-164 (VFVSVFLLYPLGQS) form a helical membrane-spanning segment. His-196 lines the chlorophyll a pocket. The helical transmembrane segment at 206–226 (GALLSAIHGVTVENTLYEDGE) threads the bilayer. A plastoquinone is bound by residues His-213 and Phe-260. His-213 contributes to the Fe cation binding site. Residue His-267 participates in Fe cation binding. The helical transmembrane segment at 277–293 (GLWTSSIGIIGLALNLR) threads the bilayer.

It belongs to the reaction center PufL/M/PsbA/D family. As to quaternary structure, PSII is composed of 1 copy each of membrane proteins PsbA, PsbB, PsbC, PsbD, PsbE, PsbF, PsbH, PsbI, PsbJ, PsbK, PsbL, PsbM, PsbT, PsbX, PsbY, PsbZ, Psb30/Ycf12, peripheral proteins PsbO, CyanoQ (PsbQ), PsbU, PsbV and a large number of cofactors. It forms dimeric complexes. The cofactor is The D1/D2 heterodimer binds P680, chlorophylls that are the primary electron donor of PSII, and subsequent electron acceptors. It shares a non-heme iron and each subunit binds pheophytin, quinone, additional chlorophylls, carotenoids and lipids. There is also a Cl(-1) ion associated with D1 and D2, which is required for oxygen evolution. The PSII complex binds additional chlorophylls, carotenoids and specific lipids..

Its subcellular location is the host cellular thylakoid membrane. The enzyme catalyses 2 a plastoquinone + 4 hnu + 2 H2O = 2 a plastoquinol + O2. Its function is as follows. Photosystem II (PSII) is a light-driven water:plastoquinone oxidoreductase that uses light energy to abstract electrons from H(2)O, generating O(2) and a proton gradient subsequently used for ATP formation. It consists of a core antenna complex that captures photons, and an electron transfer chain that converts photonic excitation into a charge separation. The D1/D2 (PsbA/PsbD) reaction center heterodimer binds P680, the primary electron donor of PSII as well as several subsequent electron acceptors. D2 is needed for assembly of a stable PSII complex. This is Photosystem II D2 protein (psbD) from Synechococcus.